The following is a 471-amino-acid chain: 5-hydroxytryptamine receptor 2A (471 aa).

Topologically, residues 1-80 (MEILCEDNIS…LQEKNWSALL (80 aa)) are extracellular. Residues asparagine 8, asparagine 38, asparagine 44, asparagine 51, and asparagine 54 are each glycosylated (N-linked (GlcNAc...) asparagine). The chain crosses the membrane as a helical span at residues 81-97 (TTVVIILTIAGNILVIM). At 98–111 (AVSLEKKLQNATNY) the chain is on the cytoplasmic side. The chain crosses the membrane as a helical span at residues 112–137 (FLMSLAIADMLLGFLVMPVSMLTILY). Residues 138–146 (GYRWPLPSK) are Extracellular-facing. The chain crosses the membrane as a helical span at residues 147-171 (LCAIWIYLDVLFSTASIMHLCAISL). Cysteine 148 and cysteine 227 form a disulfide bridge. Residue aspartate 155 coordinates serotonin. A DRY motif; important for ligand-induced conformation changes motif is present at residues 172–174 (DRY). At 172–191 (DRYVAIQNPIHHSRFNSRTK) the chain is on the cytoplasmic side. A helical membrane pass occupies residues 192–215 (AFLKIIAVWTISVGISMPIPVFGL). The Extracellular portion of the chain corresponds to 216-232 (QDDSKVFKEGSCLLADD). The chain crosses the membrane as a helical span at residues 233-258 (NFVLIGSFVAFFIPLTIMVITYFLTI). At 259–322 (KSLQKEATLC…QSISNEQKAC (64 aa)) the chain is on the cytoplasmic side. Serine 280 is modified (phosphoserine). The helical transmembrane segment at 323-348 (KVLGIVFFLFVVMWCPFFITNIMAVI) threads the bilayer. A serotonin-binding site is contributed by asparagine 343. An intrachain disulfide couples cysteine 349 to cysteine 353. The Extracellular portion of the chain corresponds to 349-356 (CKESCNEN). The chain crosses the membrane as a helical span at residues 357–382 (VIGALLNVFVWIGYLSSAVNPLVYTL). The NPxxY motif; important for ligand-induced conformation changes and signaling motif lies at 376–380 (NPLVY). The Cytoplasmic portion of the chain corresponds to 383-471 (FNKTYRSAFS…ETVNEKVSCV (89 aa)). A PDZ-binding motif is present at residues 469 to 471 (SCV).

Belongs to the G-protein coupled receptor 1 family. As to quaternary structure, interacts (via C-terminus) with MPDZ and PATJ. May interact (via C-terminus) with MPP3, PRDX6, DLG4, DLG1, CASK, APBA1 and MAGI2. Interacts with GRM2 and DRD2; this may affect signaling. As to expression, detected in adult intestine, especially in mucosal epithelium, longitudinal and circular layers of muscularis externa and myenteric plexuses. Highly expressed in Paneth cells, and detected at lower levels in enterocytes (at protein level). Detected in brain cortex.

The protein resides in the cell membrane. Its subcellular location is the cell projection. It is found in the axon. The protein localises to the cytoplasmic vesicle. It localises to the membrane. The protein resides in the caveola. Its subcellular location is the dendrite. It is found in the presynapse. G-protein coupled receptor activity is regulated by lipids: oleamide increases HTR2A-mediated activity. G-protein coupled receptor for 5-hydroxytryptamine (serotonin). Also functions as a receptor for various drugs and psychoactive substances, including mescaline, psilocybin, 1-(2,5-dimethoxy-4-iodophenyl)-2-aminopropane (DOI) and lysergic acid diethylamide (LSD). Ligand binding causes a conformation change that triggers signaling via guanine nucleotide-binding proteins (G proteins) and modulates the activity of downstream effectors. HTR2A is coupled to G(q)/G(11) G alpha proteins and activates phospholipase C-beta, releasing diacylglycerol (DAG) and inositol 1,4,5-trisphosphate (IP3) second messengers that modulate the activity of phosphatidylinositol 3-kinase and promote the release of Ca(2+) ions from intracellular stores, respectively. Beta-arrestin family members inhibit signaling via G proteins and mediate activation of alternative signaling pathways. Affects neural activity, perception, cognition and mood. Plays a role in the regulation of behavior, including responses to anxiogenic situations and psychoactive substances. Plays a role in intestinal smooth muscle contraction, and may play a role in arterial vasoconstriction. The sequence is that of 5-hydroxytryptamine receptor 2A (Htr2a) from Rattus norvegicus (Rat).